Consider the following 182-residue polypeptide: ATP synthase subunit b (182 aa).

A helical transmembrane segment spans residues 25–45 (VVLAGFAVLFYIVVKFVVPMF).

Belongs to the ATPase B chain family. In terms of assembly, F-type ATPases have 2 components, F(1) - the catalytic core - and F(0) - the membrane proton channel. F(1) has five subunits: alpha(3), beta(3), gamma(1), delta(1), epsilon(1). F(0) has three main subunits: a(1), b(2) and c(10-14). The alpha and beta chains form an alternating ring which encloses part of the gamma chain. F(1) is attached to F(0) by a central stalk formed by the gamma and epsilon chains, while a peripheral stalk is formed by the delta and b chains.

The protein localises to the cell membrane. Its function is as follows. F(1)F(0) ATP synthase produces ATP from ADP in the presence of a proton or sodium gradient. F-type ATPases consist of two structural domains, F(1) containing the extramembraneous catalytic core and F(0) containing the membrane proton channel, linked together by a central stalk and a peripheral stalk. During catalysis, ATP synthesis in the catalytic domain of F(1) is coupled via a rotary mechanism of the central stalk subunits to proton translocation. Component of the F(0) channel, it forms part of the peripheral stalk, linking F(1) to F(0). This Arthrobacter sp. (strain FB24) protein is ATP synthase subunit b.